The chain runs to 1404 residues: DNA-directed RNA polymerase subunit beta' (1404 aa).

Residues C60, C62, C75, and C78 each coordinate Zn(2+). Residues D449, D451, and D453 each contribute to the Mg(2+) site. Positions 778, 852, 859, and 862 each coordinate Zn(2+). Residues 1381-1404 (DRPLEEEEEEEIPQSIADDSDGDE) are disordered. Residues 1384 to 1404 (LEEEEEEEIPQSIADDSDGDE) are compositionally biased toward acidic residues.

It belongs to the RNA polymerase beta' chain family. The RNAP catalytic core consists of 2 alpha, 1 beta, 1 beta' and 1 omega subunit. When a sigma factor is associated with the core the holoenzyme is formed, which can initiate transcription. Mg(2+) is required as a cofactor. It depends on Zn(2+) as a cofactor.

It carries out the reaction RNA(n) + a ribonucleoside 5'-triphosphate = RNA(n+1) + diphosphate. Functionally, DNA-dependent RNA polymerase catalyzes the transcription of DNA into RNA using the four ribonucleoside triphosphates as substrates. This chain is DNA-directed RNA polymerase subunit beta', found in Leptospira borgpetersenii serovar Hardjo-bovis (strain JB197).